Consider the following 85-residue polypeptide: NADH-ubiquinone oxidoreductase chain 4L (85 aa).

A run of 2 helical transmembrane segments spans residues 21-41 (LLVT…LLVY) and 51-71 (FIFL…LVSL).

The protein belongs to the complex I subunit 4L family.

The protein localises to the mitochondrion membrane. It carries out the reaction a ubiquinone + NADH + 5 H(+)(in) = a ubiquinol + NAD(+) + 4 H(+)(out). Its function is as follows. Core subunit of the mitochondrial membrane respiratory chain NADH dehydrogenase (Complex I) that is believed to belong to the minimal assembly required for catalysis. Complex I functions in the transfer of electrons from NADH to the respiratory chain. The immediate electron acceptor for the enzyme is believed to be ubiquinone. The sequence is that of NADH-ubiquinone oxidoreductase chain 4L (ND4L) from Artemia franciscana (Brine shrimp).